We begin with the raw amino-acid sequence, 201 residues long: MRLRNIPDALERIQNQNLLVKTPWNIDDSWIIEIGMGKGKMISQLAFDNPNKNFLGVEKYPSAAVKAIKYVKKYNLSNFFILISDAKDLLDRIKGKASTIWLTFPDPWPKNRHYKRRLTYKDFLEIYANLLVKDGILKLKTDNLKFFEFSIESLKENGWKITYQTNDLHNSLVNSSNIKTTYEEKWVNLNYKIHYLEAIFI.

The S-adenosyl-L-methionine site is built by Glu-33, Glu-58, Asp-85, and Asp-106. Residue Asp-106 is part of the active site. Residues Lys-110, Asp-142, and 180-183 (TTYE) contribute to the substrate site.

Belongs to the class I-like SAM-binding methyltransferase superfamily. TrmB family.

It carries out the reaction guanosine(46) in tRNA + S-adenosyl-L-methionine = N(7)-methylguanosine(46) in tRNA + S-adenosyl-L-homocysteine. It functions in the pathway tRNA modification; N(7)-methylguanine-tRNA biosynthesis. In terms of biological role, catalyzes the formation of N(7)-methylguanine at position 46 (m7G46) in tRNA. The protein is tRNA (guanine-N(7)-)-methyltransferase of Mesomycoplasma hyopneumoniae (strain J / ATCC 25934 / NCTC 10110) (Mycoplasma hyopneumoniae).